The primary structure comprises 876 residues: MSKSTAEIRQAFLDFFHSKGHQVVASSSLVPNNDPTLLFTNAGMNQFKDVFLGLDKRNYSRATTSQRCVRAGGKHNDLENVGYTARHHTFFEMLGNFSFGDYFKHDAIQFAWELLTGENWFALPKERLWVTVYETDDEAYEIWEKEVGIPRERIIRIGDNKGAPYASDNFWQMGDTGPCGPCTEIFYDHGDHIWGGPPGSPEEDGDRYIEIWNIVFMQFNRQADGAMEPLPKPSVDTGMGLERIAAVLQHVNSNYDIDLFRTLIEAVAKVTGATDLGNKSLRVIADHIRSCAFLVADGVLPSNENRGYVLRRIIRRAVRHGNMLGAKETFFYKLVGPLIEVMGSAGEELKRQQAQVEQVLKTEEEQFARTLERGLALLDEELAKLQGDTLDGETAFRLYDTYGFPVDLTADVCRERNIKVDEAGFEAAMEEQRRRAREASGFGADYNAMIRVDSASEFKGYDHLELNGKVTALFVDGKAVEAINAGQEAVVVLDQTPFYAESGGQVGDKGELKGAGFTFSVDDTQKYGQAIGHLGKLSAGALKVGDAVQADVDEARRARIRLNHSATHLMHAALRQVLGTHVAQKGSLVSDKVLRFDFSHNEAMKPSEIREVEDLVNAQIRRNLPIETNIMDLDAAKAKGAMALFGEKYDERVRVLSMGDFSTELCGGTHASRTGDIGLFRIISESGTAAGIRRIEAVTGEGAMATVHAQSDRLNDIAHLLKGDSQNLGDKVRAVLERTRQLEKELQQLKDQAAAQESANLSSKAVDLNGVKLLVSELAGIEPKMLRTMVDDLKNQLGSTVIVLATVVEGKVSLIAGVSKDVTDRVKAGELIGMVAQQVGGKGGGRPDMAQAGGTDAAALPAALASVQGWVSAKLQ.

Residues His564, His568, Cys666, and His670 each coordinate Zn(2+).

Belongs to the class-II aminoacyl-tRNA synthetase family. In terms of assembly, homotetramer. Zn(2+) serves as cofactor.

The protein resides in the cytoplasm. The catalysed reaction is tRNA(Ala) + L-alanine + ATP = L-alanyl-tRNA(Ala) + AMP + diphosphate. Functionally, catalyzes the attachment of alanine to tRNA(Ala) in a two-step reaction: alanine is first activated by ATP to form Ala-AMP and then transferred to the acceptor end of tRNA(Ala). Also edits incorrectly charged Ser-tRNA(Ala) and Gly-tRNA(Ala) via its editing domain. The chain is Alanine--tRNA ligase from Salmonella paratyphi B (strain ATCC BAA-1250 / SPB7).